The chain runs to 307 residues: NAD kinase (307 aa).

Residue Asp-80 is the Proton acceptor of the active site. NAD(+) is bound by residues 80 to 81 (DG), His-85, 154 to 155 (ND), His-165, His-182, Asp-184, 195 to 200 (TAYALS), and Gln-254.

It belongs to the NAD kinase family. It depends on a divalent metal cation as a cofactor.

The protein resides in the cytoplasm. It catalyses the reaction NAD(+) + ATP = ADP + NADP(+) + H(+). Involved in the regulation of the intracellular balance of NAD and NADP, and is a key enzyme in the biosynthesis of NADP. Catalyzes specifically the phosphorylation on 2'-hydroxyl of the adenosine moiety of NAD to yield NADP. In Acinetobacter baylyi (strain ATCC 33305 / BD413 / ADP1), this protein is NAD kinase.